A 376-amino-acid polypeptide reads, in one-letter code: Uroporphyrinogen decarboxylase (376 aa).

Substrate contacts are provided by residues 29–33 (RQAGR), aspartate 79, tyrosine 155, serine 210, and histidine 342.

Belongs to the uroporphyrinogen decarboxylase family. Homodimer.

It localises to the cytoplasm. It carries out the reaction uroporphyrinogen III + 4 H(+) = coproporphyrinogen III + 4 CO2. Its pathway is porphyrin-containing compound metabolism; protoporphyrin-IX biosynthesis; coproporphyrinogen-III from 5-aminolevulinate: step 4/4. Catalyzes the decarboxylation of four acetate groups of uroporphyrinogen-III to yield coproporphyrinogen-III. The sequence is that of Uroporphyrinogen decarboxylase from Paracidovorax citrulli (strain AAC00-1) (Acidovorax citrulli).